Consider the following 460-residue polypeptide: Ribosome biogenesis protein YTM1 (460 aa).

A ubiquitin-like (UBL) domain region spans residues 8–89 (VKIRFFTREK…EASLNVEYTR (82 aa)). Residues 99 to 460 (SFSNEDWVSS…INKGDNIFKN (362 aa)) form a sufficient for interaction with ERB1 and association with 66S pre-ribosomes region. 7 WD repeats span residues 101–140 (SNED…QKQY), 142–180 (GHSG…LKLT), 206–244 (GHKA…MTVV), 285–325 (SHTA…CIDT), 327–366 (TTSY…SSKV), 373–413 (GHKN…PMYT), and 424–460 (GVND…IFKN).

It belongs to the WD repeat WDR12/YTM1 family. As to quaternary structure, component of the NOP7 complex, composed of ERB1, NOP7 and YTM1. The complex is held together by ERB1, which interacts with NOP7 via its N-terminal domain and with YTM1 via a high-affinity interaction between the seven-bladed beta-propeller domains of the 2 proteins. The NOP7 complex associates with the 66S pre-ribosome. Interacts (via UBL domain) with MDN1 (via VWFA/MIDAS domain).

It localises to the nucleus. The protein resides in the nucleolus. It is found in the nucleoplasm. In terms of biological role, component of the NOP7 complex, which is required for maturation of the 25S and 5.8S ribosomal RNAs and formation of the 60S ribosome. This chain is Ribosome biogenesis protein YTM1, found in Saccharomyces cerevisiae (strain YJM789) (Baker's yeast).